The chain runs to 422 residues: Solute carrier family 35 member D3 (422 aa).

10 helical membrane passes run 9–29, 38–58, 64–84, 103–123, 131–151, 155–175, 187–207, 224–244, 257–277, and 280–300; these read VLGI…NILL, FSFL…SLEL, LIAV…VAVL, MYVV…VLVL, GVLA…AGDL, PIGY…LVLI, LTAQ…CSFA, AMVS…FTTL, FVGV…FSDV, and TSLF…YCVA. Residues 339–365 are disordered; sequence AKSGNSEPESAEGAGDSVQQGGQESRG. The segment covering 355–364 has biased composition (polar residues); the sequence is SVQQGGQESR.

The protein belongs to the TPT transporter family. SLC35D subfamily. In terms of assembly, could interact with ATG14, BECN1 and PIK3C3 that form the PI3KC3-C1/AIC/autophagy initiation complex; enhancing the formation of the AIC and promoting autophagy. In terms of tissue distribution, expressed in brain. Expressed in subsets of dopaminergic neurons. Expressed in maturing megakaryocytes.

Its subcellular location is the cytoplasmic vesicle. It localises to the secretory vesicle. The protein localises to the synaptic vesicle membrane. The protein resides in the early endosome membrane. It is found in the endoplasmic reticulum membrane. The catalysed reaction is UDP-alpha-D-glucose(in) = UDP-alpha-D-glucose(out). With respect to regulation, inhibited by proton uncouplers that directly abolish the proton electrochemical gradient. In terms of biological role, probable UDP-glucose transmembrane transporter involved in UDP-glucose transport from the cytosol to the lumen of synaptic vesicles. It is involved in platelet dense granules maturation. Its function is as follows. Alternatively, could function as a molecular adapter enhancing the formation of the PI3KC3-C1/AIC/autophagy initiation complex to promote autophagy in dopaminergic neurons. Could also regulate the plasma membrane localization of the D(1A) dopamine receptor/DRD1 and dopamine signaling. This is Solute carrier family 35 member D3 from Mus musculus (Mouse).